The primary structure comprises 355 residues: tRNA (guanine-N(1)-)-methyltransferase (355 aa).

S-adenosyl-L-methionine is bound by residues Gly109 and 129 to 134 (IGDYVL).

This sequence belongs to the RNA methyltransferase TrmD family. As to quaternary structure, homodimer.

It is found in the cytoplasm. The enzyme catalyses guanosine(37) in tRNA + S-adenosyl-L-methionine = N(1)-methylguanosine(37) in tRNA + S-adenosyl-L-homocysteine + H(+). Its function is as follows. Specifically methylates guanosine-37 in various tRNAs. This Chlamydia abortus (strain DSM 27085 / S26/3) (Chlamydophila abortus) protein is tRNA (guanine-N(1)-)-methyltransferase.